Here is a 170-residue protein sequence, read N- to C-terminus: Shikimate kinase (170 aa).

11–16 lines the ATP pocket; that stretch reads LSGKST. Ser15 is a binding site for Mg(2+). Positions 33, 57, and 79 each coordinate substrate. Arg119 contacts ATP. A substrate-binding site is contributed by Arg137.

The protein belongs to the shikimate kinase family. In terms of assembly, monomer. It depends on Mg(2+) as a cofactor.

Its subcellular location is the cytoplasm. It carries out the reaction shikimate + ATP = 3-phosphoshikimate + ADP + H(+). It participates in metabolic intermediate biosynthesis; chorismate biosynthesis; chorismate from D-erythrose 4-phosphate and phosphoenolpyruvate: step 5/7. Functionally, catalyzes the specific phosphorylation of the 3-hydroxyl group of shikimic acid using ATP as a cosubstrate. The sequence is that of Shikimate kinase from Clostridium botulinum (strain Langeland / NCTC 10281 / Type F).